The sequence spans 110 residues: Small heat shock protein hspG11 (110 aa).

A sHSP domain is found at 30–110 (KTIIDILPPM…KSTSTSSTFR (81 aa)). The interval 78–110 (KDLNKQHNNNNNNNNNNNNLVIEKSTSTSSTFR) is disordered. The span at 85-96 (NNNNNNNNNNNN) shows a compositional bias: low complexity. The segment covering 101-110 (KSTSTSSTFR) has biased composition (polar residues).

Belongs to the small heat shock protein (HSP20) family.

This Dictyostelium discoideum (Social amoeba) protein is Small heat shock protein hspG11 (hspG11).